A 108-amino-acid polypeptide reads, in one-letter code: UPF0060 membrane protein YE2027 (108 aa).

4 helical membrane passes run 6–26 (LLFF…YLWL), 29–49 (GASM…VWLL), 59–79 (VYAA…RVVD), and 85–105 (LFDW…VAGW).

It belongs to the UPF0060 family.

It is found in the cell inner membrane. The sequence is that of UPF0060 membrane protein YE2027 from Yersinia enterocolitica serotype O:8 / biotype 1B (strain NCTC 13174 / 8081).